We begin with the raw amino-acid sequence, 248 residues long: Octanoyltransferase (248 aa).

Residues 53 to 234 form the BPL/LPL catalytic domain; sequence ADTVDEIWIV…RLIANLDGES (182 aa). Residues 93–100, 165–167, and 178–180 contribute to the substrate site; these read RGGQITYH, ALG, and GLS. Cys196 serves as the catalytic Acyl-thioester intermediate.

This sequence belongs to the LipB family.

The protein resides in the cytoplasm. It catalyses the reaction octanoyl-[ACP] + L-lysyl-[protein] = N(6)-octanoyl-L-lysyl-[protein] + holo-[ACP] + H(+). It functions in the pathway protein modification; protein lipoylation via endogenous pathway; protein N(6)-(lipoyl)lysine from octanoyl-[acyl-carrier-protein]: step 1/2. In terms of biological role, catalyzes the transfer of endogenously produced octanoic acid from octanoyl-acyl-carrier-protein onto the lipoyl domains of lipoate-dependent enzymes. Lipoyl-ACP can also act as a substrate although octanoyl-ACP is likely to be the physiological substrate. The sequence is that of Octanoyltransferase from Burkholderia multivorans (strain ATCC 17616 / 249).